A 450-amino-acid polypeptide reads, in one-letter code: C4-dicarboxylate transport protein (450 aa).

9 consecutive transmembrane segments (helical) span residues 10–30 (SLYFQVIVAIVIGILIGHFYP), 46–66 (LIKMVIAPIIFCTVVSGIAGM), 78–98 (YALLYFEIVSTIALLIGLIVV), 143–163 (IVGAFANGDILQVLMFSVIFG), 190–210 (IINMIMKLAPLGAFGAMAFTI), 224–244 (LMICFYITCALFVVFVLGAIA), 291–311 (VVGLVIPTGYSFNLDGTSIYL), 332–352 (ITLLLVLLLSSKGAAGVTGSG), and 354–374 (IVLAATLSAVGHLPVAGLALI). The segment at 428-450 (PEDDLGVAEGPTPGAAVNTTKTV) is disordered.

Belongs to the dicarboxylate/amino acid:cation symporter (DAACS) (TC 2.A.23) family.

Its subcellular location is the cell inner membrane. Responsible for the transport of dicarboxylates such as succinate, fumarate, and malate from the periplasm across the membrane. The polypeptide is C4-dicarboxylate transport protein (Pseudomonas syringae pv. syringae (strain B728a)).